The following is a 388-amino-acid chain: Succinate--CoA ligase [ADP-forming] subunit beta (388 aa).

The region spanning 9 to 244 is the ATP-grasp domain; the sequence is KQLFAEYGLP…PSQDDAREAH (236 aa). ATP-binding positions include lysine 46, 53 to 55, glutamate 99, threonine 102, and glutamate 107; that span reads GRG. Asparagine 199 and aspartate 213 together coordinate Mg(2+). Residues asparagine 264 and 321-323 contribute to the substrate site; that span reads GIV.

Belongs to the succinate/malate CoA ligase beta subunit family. Heterotetramer of two alpha and two beta subunits. Mg(2+) serves as cofactor.

It catalyses the reaction succinate + ATP + CoA = succinyl-CoA + ADP + phosphate. The catalysed reaction is GTP + succinate + CoA = succinyl-CoA + GDP + phosphate. It functions in the pathway carbohydrate metabolism; tricarboxylic acid cycle; succinate from succinyl-CoA (ligase route): step 1/1. Its function is as follows. Succinyl-CoA synthetase functions in the citric acid cycle (TCA), coupling the hydrolysis of succinyl-CoA to the synthesis of either ATP or GTP and thus represents the only step of substrate-level phosphorylation in the TCA. The beta subunit provides nucleotide specificity of the enzyme and binds the substrate succinate, while the binding sites for coenzyme A and phosphate are found in the alpha subunit. This Pseudomonas paraeruginosa (strain DSM 24068 / PA7) (Pseudomonas aeruginosa (strain PA7)) protein is Succinate--CoA ligase [ADP-forming] subunit beta.